A 339-amino-acid chain; its full sequence is MTNRHLAKFAYREEFKGDTEALAAAVREDASTGSTSQLPLEVQFGKMSNQKTVSVCIIGRPNSGKSTLLNRIIGEKLSIVTPKVQTTRSIITGIITLKDTQVILYDTPGIFEPKGSLEKAMVRCAWSSLHSADLVLLIIDSLKSFDDITHNIVDKLRSLNIVPIFLLNKIDIESKYLNDIKAFLTENHPDSLLFPISALSGKNIDGLLEYITSKAKISPWLYAEDDITDLPMRFIAAEITREQLFLNLQKELPYKLTVQTEKWEDLKDKSVKINQVIVVSRESYKTIILGKNGSKIKEIGAKSRMQMERFFGFPVHLFLFVKVRELWENNQEFYQYMKI.

The RPE1 insert domain occupies 4 to 48 (RHLAKFAYREEFKGDTEALAAAVREDASTGSTSQLPLEVQFGKMS). The Era-type G domain maps to 51–220 (KTVSVCIIGR…ITSKAKISPW (170 aa)). The interval 59–66 (GRPNSGKS) is G1. 59 to 66 (GRPNSGKS) provides a ligand contact to GTP. Residues 85-89 (QTTRS) form a G2 region. A G3 region spans residues 106 to 109 (DTPG). GTP contacts are provided by residues 106–110 (DTPGI) and 168–171 (NKID). The tract at residues 168–171 (NKID) is G4. The interval 196–198 (ISA) is G5. The KH type-2 domain occupies 248–325 (LQKELPYKLT…HLFLFVKVRE (78 aa)).

It belongs to the TRAFAC class TrmE-Era-EngA-EngB-Septin-like GTPase superfamily. Era GTPase family. Monomer.

The protein localises to the cytoplasm. It localises to the cell inner membrane. Its function is as follows. An essential GTPase that binds both GDP and GTP, with rapid nucleotide exchange. Plays a role in 16S rRNA processing and 30S ribosomal subunit biogenesis and possibly also in cell cycle regulation and energy metabolism. This chain is GTPase Era, found in Rickettsia conorii (strain ATCC VR-613 / Malish 7).